The chain runs to 367 residues: Anhydro-N-acetylmuramic acid kinase (367 aa).

13 to 20 is an ATP binding site; it reads GTSMDGAD.

It belongs to the anhydro-N-acetylmuramic acid kinase family.

It carries out the reaction 1,6-anhydro-N-acetyl-beta-muramate + ATP + H2O = N-acetyl-D-muramate 6-phosphate + ADP + H(+). Its pathway is amino-sugar metabolism; 1,6-anhydro-N-acetylmuramate degradation. It functions in the pathway cell wall biogenesis; peptidoglycan recycling. Catalyzes the specific phosphorylation of 1,6-anhydro-N-acetylmuramic acid (anhMurNAc) with the simultaneous cleavage of the 1,6-anhydro ring, generating MurNAc-6-P. Is required for the utilization of anhMurNAc either imported from the medium or derived from its own cell wall murein, and thus plays a role in cell wall recycling. The polypeptide is Anhydro-N-acetylmuramic acid kinase (Neisseria meningitidis serogroup B (strain ATCC BAA-335 / MC58)).